The sequence spans 149 residues: Calmodulin-5/6/7/8 (149 aa).

At Ala2 the chain carries N-acetylalanine. 4 EF-hand domains span residues 8-43 (DQIS…LGQN), 44-79 (PTEA…KMKD), 81-116 (DSEE…LGEK), and 117-149 (LTDE…MMAK). Ca(2+) contacts are provided by Asp21, Asp23, Asp25, Cys27, Glu32, Asp57, Asp59, Asn61, Thr63, Glu68, Asp94, Asp96, Asn98, and Glu105. Lys116 carries the post-translational modification N6,N6,N6-trimethyllysine. The Ca(2+) site is built by Asp130, Asp132, Asp134, Gln136, and Glu141.

The protein belongs to the calmodulin family. In terms of tissue distribution, high expression of PCM5 and 8 in stolon tips and stems, moderate in roots, and low in leaves. Steady-state expression of PCM6 in all the tissues tested, except in the leaves where the expression is lower.

In terms of biological role, calmodulin mediates the control of a large number of enzymes, ion channels and other proteins by Ca(2+). Among the enzymes to be stimulated by the calmodulin-Ca(2+) complex are a number of protein kinases and phosphatases. The polypeptide is Calmodulin-5/6/7/8 (PCM5) (Solanum tuberosum (Potato)).